The primary structure comprises 382 residues: Alkanesulfonate monooxygenase (382 aa).

This sequence belongs to the SsuD family. In terms of assembly, homotetramer.

The enzyme catalyses an alkanesulfonate + FMNH2 + O2 = an aldehyde + FMN + sulfite + H2O + 2 H(+). Catalyzes the desulfonation of aliphatic sulfonates. The chain is Alkanesulfonate monooxygenase from Yersinia pseudotuberculosis serotype O:1b (strain IP 31758).